A 166-amino-acid chain; its full sequence is MTESTSLRPAYARLLDRAVRILAVRDHSEQELRRKLAAPIMGKNGPEEIDATAEDYERVIAWCHEHGYLDDSRFVARFIASRSRKGYGPARIRQELNQKGISREATEKAMRECDIDWCALARDQATRKYGEPLPTVFSEKVKIQRFLLYRGYLMEDIQDIWRNFAD.

Belongs to the RecX family.

The protein localises to the cytoplasm. Its function is as follows. Modulates RecA activity. The protein is Regulatory protein RecX of Escherichia coli (strain SMS-3-5 / SECEC).